The primary structure comprises 313 residues: MQNMFSFLSNKKIIALFLIIGTIFMPLSSEAYPIFAQQNYASPREATGRIVCANCHLAKKPVDIEVPQAVLPDTVFEAVVKIPYDTQVQQVLGNGKKGPLNVGAVLILPEGFKLAPQDRIPEEMKSKISNLYFQPYNAANENILVIGPIPGDKNREIVFPILSPDPAKDKGTYFIKYPISVGANRGRGQVYPDGSKSNNTVYNASVSGTITDIIKEKKAYKISIETKDGTVVDTVPVGPELIVAKGDTVVTGQPITDNPNVGGFGQMDTEVVLQNPVRIKWLIAFLILSTLGQVFLVLKKKQFERVQIAESNF.

The first 31 residues, 1-31, serve as a signal peptide directing secretion; the sequence is MQNMFSFLSNKKIIALFLIIGTIFMPLSSEA. Residues Y32, C52, C55, and H56 each contribute to the heme site. A helical membrane pass occupies residues 279 to 298; the sequence is IKWLIAFLILSTLGQVFLVL.

The protein belongs to the cytochrome f family. As to quaternary structure, the 4 large subunits of the cytochrome b6-f complex are cytochrome b6, subunit IV (17 kDa polypeptide, petD), cytochrome f and the Rieske protein, while the 4 small subunits are PetG, PetL, PetM and PetN. The complex functions as a dimer. Heme serves as cofactor.

It localises to the plastid. The protein resides in the chloroplast thylakoid membrane. Its function is as follows. Component of the cytochrome b6-f complex, which mediates electron transfer between photosystem II (PSII) and photosystem I (PSI), cyclic electron flow around PSI, and state transitions. This Mesostigma viride (Green alga) protein is Cytochrome f (petA).